A 294-amino-acid chain; its full sequence is Decaprenyl-diphosphate synthase subunit 2 (294 aa).

Belongs to the FPP/GGPP synthase family. In terms of assembly, heterotetramer of 2 dps1 and 2 dlp1 subunits.

The protein localises to the mitochondrion. It catalyses the reaction 7 isopentenyl diphosphate + (2E,6E)-farnesyl diphosphate = all-trans-decaprenyl diphosphate + 7 diphosphate. It participates in cofactor biosynthesis; ubiquinone biosynthesis. Its function is as follows. Supplies decaprenyl diphosphate, the precursor for the side chain of the isoprenoid quinones ubiquinone-10. The protein is Decaprenyl-diphosphate synthase subunit 2 (dlp1) of Schizosaccharomyces pombe (strain 972 / ATCC 24843) (Fission yeast).